The primary structure comprises 358 residues: 3-dehydroquinate synthase (358 aa).

Residues Asp-70–Lys-75, Gly-104–Asp-108, Thr-128–Thr-129, Lys-141, Lys-150, and Cys-168–Thr-171 each bind NAD(+). Positions 183, 246, and 263 each coordinate Zn(2+).

Belongs to the sugar phosphate cyclases superfamily. Dehydroquinate synthase family. Requires Co(2+) as cofactor. Zn(2+) is required as a cofactor. The cofactor is NAD(+).

The protein resides in the cytoplasm. It carries out the reaction 7-phospho-2-dehydro-3-deoxy-D-arabino-heptonate = 3-dehydroquinate + phosphate. Its pathway is metabolic intermediate biosynthesis; chorismate biosynthesis; chorismate from D-erythrose 4-phosphate and phosphoenolpyruvate: step 2/7. In terms of biological role, catalyzes the conversion of 3-deoxy-D-arabino-heptulosonate 7-phosphate (DAHP) to dehydroquinate (DHQ). This is 3-dehydroquinate synthase from Shewanella woodyi (strain ATCC 51908 / MS32).